Reading from the N-terminus, the 386-residue chain is O-methyltransferase 10 (386 aa).

S-adenosyl-L-homocysteine contacts are provided by S207, G231, D254, D274, and K288. D254 provides a ligand contact to S-adenosyl-L-methionine. H292 serves as the catalytic Proton acceptor.

Belongs to the class I-like SAM-binding methyltransferase superfamily. Cation-independent O-methyltransferase family. As to quaternary structure, homodimer.

The enzyme catalyses dopamine + S-adenosyl-L-methionine = 4-methoxytyramine + S-adenosyl-L-homocysteine + H(+). The catalysed reaction is 3,4-dihydroxy-5-methoxyphenethylamine + S-adenosyl-L-methionine = 3-hydroxy-4,5-dimethoxyphenethylamine + S-adenosyl-L-homocysteine + H(+). It carries out the reaction 3-hydroxy-4,5-dimethoxyphenethylamine + S-adenosyl-L-methionine = mescaline + S-adenosyl-L-homocysteine + H(+). It catalyses the reaction 4-hydroxy-3,5-dimethoxyphenethylamine + S-adenosyl-L-methionine = mescaline + S-adenosyl-L-homocysteine + H(+). The protein operates within aromatic compound metabolism. It functions in the pathway alkaloid biosynthesis. In terms of biological role, O-methyltransferase participating in the biosynthesis of natural products derived from phenylethylamine, including mescaline, a natural hallucinogen potentially used in psychotherapeutic treatments. Catalyzes the O-methylation of mescaline para hydroxyl groups, using dopamine, 3,4-dihydroxy-5-methoxyphenethylamine, 3-hydroxy-4,5-dimethoxyphenethylamine and 4-hydroxy-3,5-dimethoxyphenethylamine as substrates. The polypeptide is O-methyltransferase 10 (Lophophora williamsii (Peyote)).